The primary structure comprises 489 residues: Dipeptide and tripeptide permease B (489 aa).

The Cytoplasmic portion of the chain corresponds to 1 to 27 (MNKPASIGLLQQPKPFFMIFFVELWER). The chain crosses the membrane as a helical span at residues 28-48 (FGYYGVQGILAVYFVHKLGFS). Residues 49–52 (QEQA) lie on the Periplasmic side of the membrane. The helical transmembrane segment at 53 to 73 (FTTFGAFAALVYGLIAIGGYV) threads the bilayer. Residues 74–82 (GDHLLGTKR) are Cytoplasmic-facing. Residues 83–103 (TIVLGAIVLTVGYFMTGLSIL) form a helical membrane-spanning segment. Topologically, residues 104 to 106 (KPE) are periplasmic. Residues 107–127 (LIFYALGTIAVGNGLFKANPA) form a helical membrane-spanning segment. Over 128–146 (SLLSKCYPPKDPRLDGAFT) the chain is Cytoplasmic. The helical transmembrane segment at 147–167 (LFYMSINIGSLFSLAIAPVIA) threads the bilayer. The Periplasmic portion of the chain corresponds to 168–171 (EKFG). A helical membrane pass occupies residues 172–192 (YAVTYNICGIGLIIALLVYVL). The Cytoplasmic portion of the chain corresponds to 193-212 (YRNTVRNIGSEPDHRPINYK). 2 helical membrane-spanning segments follow: residues 213–233 (NLLLVLAGTVTMVFVCAWLMH) and 234–254 (NVKIANIVLIGLSVVIVFIFF). The Cytoplasmic portion of the chain corresponds to 255 to 267 (REAFKQDKVGRNK). A helical transmembrane segment spans residues 268–288 (MFVAFILMLQAIVFFILYAQM). The Periplasmic segment spans residues 289–311 (PTSLNFFAINNVHHQLLGFNINP). The chain crosses the membrane as a helical span at residues 312–332 (VSFQALNPFWIVVASPILAAL). The Cytoplasmic segment spans residues 333 to 350 (YTHWGSRSKDLTMPAKFT). Residues 351–371 (VGMFLCSLGFLTAAAAGLWFA) form a helical membrane-spanning segment. Residues 372–375 (DEQG) lie on the Periplasmic side of the membrane. A helical membrane pass occupies residues 376–396 (LTSPWFIVLVYLFQSLGELMI). Residues 397-419 (SALGLAMVAALVPQYLMGFILGM) are Cytoplasmic-facing. Residues 420–440 (WYLTQATSFLLGGYVAAFTAI) form a helical membrane-spanning segment. At 441-456 (PEGITDPLETLPVYTN) the chain is on the periplasmic side. A helical membrane pass occupies residues 457–477 (VFGKIGITTFIVAIIMAITVP). The Cytoplasmic segment spans residues 478 to 489 (LLNRMMNGKQKA).

Belongs to the major facilitator superfamily. Proton-dependent oligopeptide transporter (POT/PTR) (TC 2.A.17) family. DtpB subfamily.

Its subcellular location is the cell inner membrane. Functionally, proton-dependent permease that transports di- and tripeptides. The protein is Dipeptide and tripeptide permease B of Photorhabdus asymbiotica subsp. asymbiotica (strain ATCC 43949 / 3105-77) (Xenorhabdus luminescens (strain 2)).